A 189-amino-acid chain; its full sequence is Elongation factor P (189 aa).

The protein belongs to the elongation factor P family.

It localises to the cytoplasm. Its pathway is protein biosynthesis; polypeptide chain elongation. Involved in peptide bond synthesis. Stimulates efficient translation and peptide-bond synthesis on native or reconstituted 70S ribosomes in vitro. Probably functions indirectly by altering the affinity of the ribosome for aminoacyl-tRNA, thus increasing their reactivity as acceptors for peptidyl transferase. The protein is Elongation factor P of Rhizobium rhizogenes (strain K84 / ATCC BAA-868) (Agrobacterium radiobacter).